Here is a 180-residue protein sequence, read N- to C-terminus: Inner membrane-spanning protein YciB (180 aa).

Helical transmembrane passes span 4–24, 25–45, 52–72, 76–96, 118–138, and 150–170; these read LLSEIGPVVAFFAGFFYGGGI, QSATLYMLITSVICITLCYII, LSIISTAVLLVSGIITLISGD, IKIKPTILYVIFGIIFLTSGI, ITLSYRTATFFFFMAIVNEIV, and FKVFGVVPITFVFILLQLPLL.

The protein belongs to the YciB family.

Its subcellular location is the cell inner membrane. In terms of biological role, plays a role in cell envelope biogenesis, maintenance of cell envelope integrity and membrane homeostasis. This Rickettsia bellii (strain RML369-C) protein is Inner membrane-spanning protein YciB.